Here is a 384-residue protein sequence, read N- to C-terminus: Probable inactive patatin-like protein 9 (384 aa).

The PNPLA domain occupies 33 to 234; it reads LSIDGGGTTG…VMNNPTAAAV (202 aa). Residues 37–42 carry the GXGXXG motif; sequence GGGTTG. Asp-221 functions as the Proton acceptor in the catalytic mechanism. Positions 221 to 223 match the DGA/G motif; that stretch reads DGG. Positions 363-384 are disordered; it reads GKSSLPPSPCKESAVNPLADGR.

This sequence belongs to the patatin family. In terms of tissue distribution, highly expressed in roots and at lower levels in flowers and siliques.

This Arabidopsis thaliana (Mouse-ear cress) protein is Probable inactive patatin-like protein 9 (PLP9).